The sequence spans 1160 residues: MSEPRFVHLRVHSDYSMIDGLAKTAPLVKKAAALGMPALAITDFTNLCGLVKFYGAGHGAGIKPIVGADFNVQCDLLGDELTHLTVLAANNIGYQNLTLLISKAYQRGYGAAGPIIDRDWLIELNEGLILLSGGRMGDVGRSLLRGNSALVDECVAFYEEHFPDRYFLELIRTGRPDEESYLHAAVELAEARGLPVVATNDVRFIDSSDFDAHEIRVAIHDGFTLDDPKRPRNYSPQQYMRSEEEMCELFADIPEALANTVEIAKRCNVTVRLGEYFLPQFPTGDMSTEDYLVKRAKEGLEERLAFLFPDEEERLKRRPEYDERLDTELQVINQMGFPGYFLIVMEFIQWSKDNGVPVGPGRGSGAGSLVAYALKITDLDPLEFDLLFERFLNPERVSMPDFDVDFCMEKRDQVIEHVADMYGRDAVSQIITFGTMAAKAVIRDVGRVLGHPYGFVDRISKLIPPDPGMTLAKAFEAEPQLPEIYEADEEVKALIDMARKLEGVTRNAGKHAGGVVIAPTKITDFAPLYCDEEGKHPVTQFDKSDVEYAGLVKFDFLGLRTLTIINWALEMINKRRAKNGEPPLDIAAIPLDDKKSFDMLQRSETTAVFQLESRGMKDLIKRLQPDCFEDMIALVALFRPGPLQSGMVDNFIDRKHGREEISYPDVQWQHESLKPVLEPTYGIILYQEQVMQIAQVLSGYTLGGADMLRRAMGKKKPEEMAKQRSVFAEGAEKNGINAELAMKIFDLVEKFAGYGFNKSHSAAYALVSYQTLWLKAHYPAEFMAAVMTADMDNTEKVVGLVDECWRMGLKILPPDINSGLYHFHVNDDGEIVYGIGAIKGVGEGPIEAIIEARNKGGYFRELFDLCARTDTKKLNRRVLEKLIMSGAFDRLGPHRAALMNSLGDALKAADQHAKAEAIGQADMFGVLAEEPEQIEQSYASCQPWPEQVVLDGERETLGLYLTGHPINQYLKEIERYVGGVRLKDMHPTERGKVTTAAGLVVAARVMVTKRGNRIGICTLDDRSGRLEVMLFTDALDKYQQLLEKDRILIVSGQVSFDDFSGGLKMTAREVMDIDEAREKYARGLAISLTDRQIDDQLLNRLRQSLEPHRSGTIPVHLYYQRADARARLRFGATWRVSPSDRLLNDLRGLIGSEQVELEFD.

Its subcellular location is the cytoplasm. It catalyses the reaction DNA(n) + a 2'-deoxyribonucleoside 5'-triphosphate = DNA(n+1) + diphosphate. In terms of biological role, DNA polymerase III is a complex, multichain enzyme responsible for most of the replicative synthesis in bacteria. This DNA polymerase also exhibits 3' to 5' exonuclease activity. The alpha chain is the DNA polymerase. In Escherichia coli O6:H1 (strain CFT073 / ATCC 700928 / UPEC), this protein is DNA polymerase III subunit alpha (dnaE).